The sequence spans 518 residues: 2-isopropylmalate synthase (518 aa).

One can recognise a Pyruvate carboxyltransferase domain in the interval 5–269; sequence IIVLDTTLRD…STNVRLKELI (265 aa). Mn(2+)-binding residues include D14, H204, H206, and N240. Residues 397–518 form a regulatory domain region; it reads ELDSFQVVTN…HDSQAPVSAR (122 aa).

This sequence belongs to the alpha-IPM synthase/homocitrate synthase family. LeuA type 1 subfamily. Homodimer. Mn(2+) is required as a cofactor.

It localises to the cytoplasm. The catalysed reaction is 3-methyl-2-oxobutanoate + acetyl-CoA + H2O = (2S)-2-isopropylmalate + CoA + H(+). It participates in amino-acid biosynthesis; L-leucine biosynthesis; L-leucine from 3-methyl-2-oxobutanoate: step 1/4. Its function is as follows. Catalyzes the condensation of the acetyl group of acetyl-CoA with 3-methyl-2-oxobutanoate (2-ketoisovalerate) to form 3-carboxy-3-hydroxy-4-methylpentanoate (2-isopropylmalate). The sequence is that of 2-isopropylmalate synthase from Geobacillus sp. (strain Y412MC10).